Reading from the N-terminus, the 352-residue chain is N-acetyl-gamma-glutamyl-phosphate reductase 1 (352 aa).

This sequence belongs to the NAGSA dehydrogenase family. Type 1 subfamily.

It is found in the cytoplasm. It catalyses the reaction N-acetyl-L-glutamate 5-semialdehyde + phosphate + NADP(+) = N-acetyl-L-glutamyl 5-phosphate + NADPH + H(+). It functions in the pathway amino-acid biosynthesis; L-arginine biosynthesis; N(2)-acetyl-L-ornithine from L-glutamate: step 3/4. Functionally, catalyzes the NADPH-dependent reduction of N-acetyl-5-glutamyl phosphate to yield N-acetyl-L-glutamate 5-semialdehyde. This Nostoc sp. (strain PCC 7120 / SAG 25.82 / UTEX 2576) protein is N-acetyl-gamma-glutamyl-phosphate reductase 1.